The sequence spans 55 residues: Photosystem II reaction center protein K (55 aa).

A propeptide spanning residues 1-18 is cleaved from the precursor; it reads MFNIYLENAFYLNGITFA. The chain crosses the membrane as a helical span at residues 26-46; the sequence is IFDPIVDVMPIIPLFFFLLAF.

Belongs to the PsbK family. In terms of assembly, PSII is composed of 1 copy each of membrane proteins PsbA, PsbB, PsbC, PsbD, PsbE, PsbF, PsbH, PsbI, PsbJ, PsbK, PsbL, PsbM, PsbT, PsbX, PsbY, PsbZ, Psb30/Ycf12, at least 3 peripheral proteins of the oxygen-evolving complex and a large number of cofactors. It forms dimeric complexes.

Its subcellular location is the plastid. The protein resides in the chloroplast thylakoid membrane. In terms of biological role, one of the components of the core complex of photosystem II (PSII). PSII is a light-driven water:plastoquinone oxidoreductase that uses light energy to abstract electrons from H(2)O, generating O(2) and a proton gradient subsequently used for ATP formation. It consists of a core antenna complex that captures photons, and an electron transfer chain that converts photonic excitation into a charge separation. The protein is Photosystem II reaction center protein K of Marchantia polymorpha (Common liverwort).